A 524-amino-acid polypeptide reads, in one-letter code: Acetyl-CoA hydrolase (524 aa).

275-279 (GIGNI) contributes to the CoA binding site. Catalysis depends on glutamate 300, which acts as the 5-glutamyl coenzyme A thioester intermediate. The CoA site is built by asparagine 390 and glycine 394.

Belongs to the acetyl-CoA hydrolase/transferase family.

The protein resides in the cytoplasm. The catalysed reaction is acetyl-CoA + H2O = acetate + CoA + H(+). Its function is as follows. Presumably involved in regulating the intracellular acetyl-CoA pool for fatty acid and cholesterol synthesis and fatty acid oxidation. The sequence is that of Acetyl-CoA hydrolase (ACH1) from Candida albicans (strain SC5314 / ATCC MYA-2876) (Yeast).